A 545-amino-acid chain; its full sequence is CTP synthase (545 aa).

The amidoligase domain stretch occupies residues 1-266 (MTHFIFVTGG…DDLICERFGY (266 aa)). Ser-13 contributes to the CTP binding site. Ser-13 is a binding site for UTP. ATP is bound by residues 14–19 (SLGKGI) and Asp-71. Mg(2+) is bound by residues Asp-71 and Glu-140. Residues 147 to 149 (DIE), 187 to 192 (KTKPTQ), and Lys-223 each bind CTP. UTP-binding positions include 187–192 (KTKPTQ) and Lys-223. 239–241 (KDA) lines the ATP pocket. In terms of domain architecture, Glutamine amidotransferase type-1 spans 292 to 543 (RVAMVGKYVE…IDAAKKQHLK (252 aa)). Gly-353 contributes to the L-glutamine binding site. Cys-380 serves as the catalytic Nucleophile; for glutamine hydrolysis. L-glutamine is bound by residues 381-384 (LGMQ), Glu-404, and Arg-471. Residues His-516 and Glu-518 contribute to the active site.

It belongs to the CTP synthase family. As to quaternary structure, homotetramer.

The catalysed reaction is UTP + L-glutamine + ATP + H2O = CTP + L-glutamate + ADP + phosphate + 2 H(+). The enzyme catalyses L-glutamine + H2O = L-glutamate + NH4(+). It carries out the reaction UTP + NH4(+) + ATP = CTP + ADP + phosphate + 2 H(+). It participates in pyrimidine metabolism; CTP biosynthesis via de novo pathway; CTP from UDP: step 2/2. Its activity is regulated as follows. Allosterically activated by GTP, when glutamine is the substrate; GTP has no effect on the reaction when ammonia is the substrate. The allosteric effector GTP functions by stabilizing the protein conformation that binds the tetrahedral intermediate(s) formed during glutamine hydrolysis. Inhibited by the product CTP, via allosteric rather than competitive inhibition. Functionally, catalyzes the ATP-dependent amination of UTP to CTP with either L-glutamine or ammonia as the source of nitrogen. Regulates intracellular CTP levels through interactions with the four ribonucleotide triphosphates. In Acinetobacter baylyi (strain ATCC 33305 / BD413 / ADP1), this protein is CTP synthase.